Consider the following 1366-residue polypeptide: DNA-directed RNA polymerase subunit beta' (1366 aa).

Residues 1-40 (MTSTSPKSRRSSGKGRKGSKKKGKQVSQIPPLSKTPPSFR) are disordered. Positions 7–24 (KSRRSSGKGRKGSKKKGK) are enriched in basic residues. Polar residues predominate over residues 25-38 (QVSQIPPLSKTPPS). Positions 250, 317, 324, and 327 each coordinate Zn(2+). A disordered region spans residues 1299 to 1366 (TAAKSTSVLD…LQEEGLLADE (68 aa)). Residues 1353–1366 (ALEGLQEEGLLADE) show a composition bias toward low complexity.

It belongs to the RNA polymerase beta' chain family. RpoC2 subfamily. In cyanobacteria the RNAP catalytic core is composed of 2 alpha, 1 beta, 1 beta', 1 gamma and 1 omega subunit. When a sigma factor is associated with the core the holoenzyme is formed, which can initiate transcription. Zn(2+) is required as a cofactor.

The enzyme catalyses RNA(n) + a ribonucleoside 5'-triphosphate = RNA(n+1) + diphosphate. Its function is as follows. DNA-dependent RNA polymerase catalyzes the transcription of DNA into RNA using the four ribonucleoside triphosphates as substrates. This is DNA-directed RNA polymerase subunit beta' from Prochlorococcus marinus (strain MIT 9211).